An 891-amino-acid polypeptide reads, in one-letter code: DNA mismatch repair protein MutS (891 aa).

An ATP-binding site is contributed by 646–653 (GPNMAGKS).

It belongs to the DNA mismatch repair MutS family.

Its function is as follows. This protein is involved in the repair of mismatches in DNA. It is possible that it carries out the mismatch recognition step. This protein has a weak ATPase activity. In Rickettsia typhi (strain ATCC VR-144 / Wilmington), this protein is DNA mismatch repair protein MutS.